We begin with the raw amino-acid sequence, 177 residues long: Large ribosomal subunit protein uL6 (177 aa).

Residues 152–171 (RPPEPYKGKGVRYDDEEVRR) are compositionally biased toward basic and acidic residues. The disordered stretch occupies residues 152 to 177 (RPPEPYKGKGVRYDDEEVRRKEAKKK).

Belongs to the universal ribosomal protein uL6 family. Part of the 50S ribosomal subunit.

In terms of biological role, this protein binds to the 23S rRNA, and is important in its secondary structure. It is located near the subunit interface in the base of the L7/L12 stalk, and near the tRNA binding site of the peptidyltransferase center. The polypeptide is Large ribosomal subunit protein uL6 (Shewanella sp. (strain ANA-3)).